We begin with the raw amino-acid sequence, 419 residues long: Glutamate dehydrogenase (419 aa).

K105 is a catalytic residue. 219–225 (GYGNAGY) is an NAD(+) binding site.

This sequence belongs to the Glu/Leu/Phe/Val dehydrogenases family. In terms of assembly, homohexamer.

It is found in the cytoplasm. The catalysed reaction is L-glutamate + NAD(+) + H2O = 2-oxoglutarate + NH4(+) + NADH + H(+). It carries out the reaction L-glutamate + NADP(+) + H2O = 2-oxoglutarate + NH4(+) + NADPH + H(+). This is Glutamate dehydrogenase (gdhA) from Thermococcus litoralis (strain ATCC 51850 / DSM 5473 / JCM 8560 / NS-C).